A 215-amino-acid polypeptide reads, in one-letter code: Nascent polypeptide-associated complex subunit alpha-2 (215 aa).

Positions 1–51 are disordered; it reads MPGEATETVPATEQELPQSQAETGSGTASDSGESVPGIEEQDSTQTTTQKA. Polar residues predominate over residues 9–32; it reads VPATEQELPQSQAETGSGTASDSG. Ser-43 and Ser-132 each carry phosphoserine. Residues 70–135 form the NAC-A/B domain; it reads SRSEKRARKA…AKIQDLSQQA (66 aa). The residue at position 142 (Lys-142) is an N6-acetyllysine; alternate. A Glycyl lysine isopeptide (Lys-Gly) (interchain with G-Cter in SUMO2); alternate cross-link involves residue Lys-142. Residue Thr-161 is modified to Phosphothreonine. Phosphoserine is present on residues Ser-166, Ser-186, Ser-191, and Ser-203. The UBA domain occupies 176 to 213; sequence VEVKDVKLVMSQANVSRAKAVRALKNNSNDIVNAIMEL. A Phosphothreonine modification is found at Thr-214.

The protein belongs to the NAC-alpha family. Part of the nascent polypeptide-associated complex (NAC), consisting of NACA and BTF3. NAC associates with ribosomes through the BTF3 subunit. Both subunits can contact nascent polypeptide chains. As to expression, expressed specifically in testis and skeletal muscle.

The protein localises to the cytoplasm. Its subcellular location is the nucleus. Prevents inappropriate targeting of non-secretory polypeptides to the endoplasmic reticulum (ER). Binds to nascent polypeptide chains as they emerge from the ribosome and blocks their interaction with the signal recognition particle (SRP), which normally targets nascent secretory peptides to the ER. Also reduces the inherent affinity of ribosomes for protein translocation sites in the ER membrane (M sites). This Homo sapiens (Human) protein is Nascent polypeptide-associated complex subunit alpha-2 (NACA2).